The sequence spans 545 residues: Membrane protein insertase YidC (545 aa).

A helical membrane pass occupies residues 6–26; the sequence is NLLLIALLFVSFMIWQAWQTD. Residues 31–54 are disordered; that stretch reads PVAQTTQQTSNPATGDAASSAVPA. Transmembrane regions (helical) follow at residues 342 to 362, 417 to 437, 455 to 475, and 496 to 516; these read KFIH…TFIV, LGGC…YYML, LSAQ…MFFI, and PVIF…YYIV.

Belongs to the OXA1/ALB3/YidC family. Type 1 subfamily. As to quaternary structure, interacts with the Sec translocase complex via SecD. Specifically interacts with transmembrane segments of nascent integral membrane proteins during membrane integration.

The protein localises to the cell inner membrane. Required for the insertion and/or proper folding and/or complex formation of integral membrane proteins into the membrane. Involved in integration of membrane proteins that insert both dependently and independently of the Sec translocase complex, as well as at least some lipoproteins. Aids folding of multispanning membrane proteins. The chain is Membrane protein insertase YidC from Serratia proteamaculans (strain 568).